Here is a 232-residue protein sequence, read N- to C-terminus: 5'-methylthioadenosine/S-adenosylhomocysteine nucleosidase (232 aa).

Residue E14 is the Proton acceptor of the active site. Substrate is bound by residues G80, V154, and M175–E176. D199 functions as the Proton donor in the catalytic mechanism.

It belongs to the PNP/UDP phosphorylase family. MtnN subfamily.

The catalysed reaction is S-adenosyl-L-homocysteine + H2O = S-(5-deoxy-D-ribos-5-yl)-L-homocysteine + adenine. It carries out the reaction S-methyl-5'-thioadenosine + H2O = 5-(methylsulfanyl)-D-ribose + adenine. It catalyses the reaction 5'-deoxyadenosine + H2O = 5-deoxy-D-ribose + adenine. Its pathway is amino-acid biosynthesis; L-methionine biosynthesis via salvage pathway; S-methyl-5-thio-alpha-D-ribose 1-phosphate from S-methyl-5'-thioadenosine (hydrolase route): step 1/2. Catalyzes the irreversible cleavage of the glycosidic bond in both 5'-methylthioadenosine (MTA) and S-adenosylhomocysteine (SAH/AdoHcy) to adenine and the corresponding thioribose, 5'-methylthioribose and S-ribosylhomocysteine, respectively. Also cleaves 5'-deoxyadenosine, a toxic by-product of radical S-adenosylmethionine (SAM) enzymes, into 5-deoxyribose and adenine. The protein is 5'-methylthioadenosine/S-adenosylhomocysteine nucleosidase of Haemophilus ducreyi (strain 35000HP / ATCC 700724).